The primary structure comprises 308 residues: Mu-like prophage FluMu major head subunit (308 aa).

This sequence to phage Mu protein T.

The chain is Mu-like prophage FluMu major head subunit from Haemophilus influenzae (strain ATCC 51907 / DSM 11121 / KW20 / Rd).